We begin with the raw amino-acid sequence, 156 residues long: Small ribosomal subunit protein uS7 (156 aa).

This sequence belongs to the universal ribosomal protein uS7 family. As to quaternary structure, part of the 30S ribosomal subunit. Contacts proteins S9 and S11.

One of the primary rRNA binding proteins, it binds directly to 16S rRNA where it nucleates assembly of the head domain of the 30S subunit. Is located at the subunit interface close to the decoding center, probably blocks exit of the E-site tRNA. This is Small ribosomal subunit protein uS7 from Beijerinckia indica subsp. indica (strain ATCC 9039 / DSM 1715 / NCIMB 8712).